The following is a 156-amino-acid chain: ATP synthase subunit b (156 aa).

The chain crosses the membrane as a helical span at residues 11 to 31 (AIAFILFVWFCMKYVWPPLMA).

This sequence belongs to the ATPase B chain family. In terms of assembly, F-type ATPases have 2 components, F(1) - the catalytic core - and F(0) - the membrane proton channel. F(1) has five subunits: alpha(3), beta(3), gamma(1), delta(1), epsilon(1). F(0) has three main subunits: a(1), b(2) and c(10-14). The alpha and beta chains form an alternating ring which encloses part of the gamma chain. F(1) is attached to F(0) by a central stalk formed by the gamma and epsilon chains, while a peripheral stalk is formed by the delta and b chains.

Its subcellular location is the cell inner membrane. F(1)F(0) ATP synthase produces ATP from ADP in the presence of a proton or sodium gradient. F-type ATPases consist of two structural domains, F(1) containing the extramembraneous catalytic core and F(0) containing the membrane proton channel, linked together by a central stalk and a peripheral stalk. During catalysis, ATP synthesis in the catalytic domain of F(1) is coupled via a rotary mechanism of the central stalk subunits to proton translocation. Its function is as follows. Component of the F(0) channel, it forms part of the peripheral stalk, linking F(1) to F(0). The protein is ATP synthase subunit b of Salmonella gallinarum (strain 287/91 / NCTC 13346).